A 435-amino-acid chain; its full sequence is AP-2 complex subunit mu (435 aa).

An MHD domain is found at 170 to 434 (RNELFLDVLE…IGRSGIYETR (265 aa)). Positions 341, 345, and 354 each coordinate a 1,2-diacyl-sn-glycero-3-phospho-(1D-myo-inositol-3,4,5-trisphosphate).

The protein belongs to the adaptor complexes medium subunit family. As to quaternary structure, adaptor protein complex 2 (AP-2) is a heterotetramer composed of two large adaptins (alpha-type subunit and beta-type subunit), a medium adaptin (mu-type subunit) and a small adaptin (sigma-type subunit).

It localises to the cell membrane. It is found in the membrane. The protein localises to the coated pit. Its function is as follows. Component of the adaptor complexes which link clathrin to receptors in coated vesicles. Clathrin-associated protein complexes are believed to interact with the cytoplasmic tails of membrane proteins, leading to their selection and concentration. AP50 is a subunit of the plasma membrane adaptor. The complex binds polyphosphoinositide-containing lipids. In Xenopus tropicalis (Western clawed frog), this protein is AP-2 complex subunit mu (ap2m1).